The primary structure comprises 395 residues: Tryptophan synthase beta chain (395 aa).

N6-(pyridoxal phosphate)lysine is present on lysine 86.

Belongs to the TrpB family. Tetramer of two alpha and two beta chains. The cofactor is pyridoxal 5'-phosphate.

It catalyses the reaction (1S,2R)-1-C-(indol-3-yl)glycerol 3-phosphate + L-serine = D-glyceraldehyde 3-phosphate + L-tryptophan + H2O. The protein operates within amino-acid biosynthesis; L-tryptophan biosynthesis; L-tryptophan from chorismate: step 5/5. In terms of biological role, the beta subunit is responsible for the synthesis of L-tryptophan from indole and L-serine. This Psychromonas ingrahamii (strain DSM 17664 / CCUG 51855 / 37) protein is Tryptophan synthase beta chain.